The primary structure comprises 611 residues: UPF0508 protein SCY_3114 (611 aa).

It belongs to the UPF0508 family.

This chain is UPF0508 protein SCY_3114, found in Saccharomyces cerevisiae (strain YJM789) (Baker's yeast).